The primary structure comprises 182 residues: NADH-quinone oxidoreductase subunit I (182 aa).

2 4Fe-4S ferredoxin-type domains span residues Leu-52–Ala-82 and Glu-92–Asp-121. Cys-62, Cys-65, Cys-68, Cys-72, Cys-101, Cys-104, Cys-107, and Cys-111 together coordinate [4Fe-4S] cluster.

Belongs to the complex I 23 kDa subunit family. NDH-1 is composed of 13 different subunits. Subunits NuoA, H, J, K, L, M, N constitute the membrane sector of the complex. It depends on [4Fe-4S] cluster as a cofactor.

The protein localises to the cell inner membrane. It carries out the reaction a quinone + NADH + 5 H(+)(in) = a quinol + NAD(+) + 4 H(+)(out). Functionally, NDH-1 shuttles electrons from NADH, via FMN and iron-sulfur (Fe-S) centers, to quinones in the respiratory chain. The immediate electron acceptor for the enzyme in this species is believed to be ubiquinone. Couples the redox reaction to proton translocation (for every two electrons transferred, four hydrogen ions are translocated across the cytoplasmic membrane), and thus conserves the redox energy in a proton gradient. The protein is NADH-quinone oxidoreductase subunit I of Pseudomonas putida (strain ATCC 47054 / DSM 6125 / CFBP 8728 / NCIMB 11950 / KT2440).